A 120-amino-acid polypeptide reads, in one-letter code: Large ribosomal subunit protein uL18 (120 aa).

The protein belongs to the universal ribosomal protein uL18 family. As to quaternary structure, part of the 50S ribosomal subunit; part of the 5S rRNA/L5/L18/L25 subcomplex. Contacts the 5S and 23S rRNAs.

In terms of biological role, this is one of the proteins that bind and probably mediate the attachment of the 5S RNA into the large ribosomal subunit, where it forms part of the central protuberance. The protein is Large ribosomal subunit protein uL18 of Beijerinckia indica subsp. indica (strain ATCC 9039 / DSM 1715 / NCIMB 8712).